We begin with the raw amino-acid sequence, 135 residues long: MKRTRLLNSELSYEISRIGHTASITLCDAGLPIPSGVKRIDLAIEEGYPTFLRTLDAILSELKVEEIVIASEIHDHNQMLFEQMMKLFEAHRMAPKITEVSHVEFKQRTQASEAIVRTGECTPYANVILKSGVVF.

The active-site Proton donor is the His-20. Substrate-binding positions include Asp-28, His-102, and 124 to 126 (YAN).

This sequence belongs to the RbsD / FucU family. RbsD subfamily. As to quaternary structure, homodecamer.

It localises to the cytoplasm. It carries out the reaction beta-D-ribopyranose = beta-D-ribofuranose. It functions in the pathway carbohydrate metabolism; D-ribose degradation; D-ribose 5-phosphate from beta-D-ribopyranose: step 1/2. In terms of biological role, catalyzes the interconversion of beta-pyran and beta-furan forms of D-ribose. The polypeptide is D-ribose pyranase (Rhodopirellula baltica (strain DSM 10527 / NCIMB 13988 / SH1)).